The following is a 316-amino-acid chain: Pantothenate kinase (316 aa).

ATP is bound at residue 95–102 (GSVAVGKS).

This sequence belongs to the prokaryotic pantothenate kinase family.

It localises to the cytoplasm. The enzyme catalyses (R)-pantothenate + ATP = (R)-4'-phosphopantothenate + ADP + H(+). Its pathway is cofactor biosynthesis; coenzyme A biosynthesis; CoA from (R)-pantothenate: step 1/5. The chain is Pantothenate kinase from Shewanella baltica (strain OS223).